The following is a 496-amino-acid chain: Glycerol kinase (496 aa).

Residue threonine 12 coordinates ADP. Residues threonine 12, threonine 13, and serine 14 each contribute to the ATP site. Threonine 12 lines the sn-glycerol 3-phosphate pocket. Position 16 (arginine 16) interacts with ADP. The sn-glycerol 3-phosphate site is built by arginine 82, glutamate 83, and tyrosine 134. The glycerol site is built by arginine 82, glutamate 83, and tyrosine 134. Phosphohistidine; by HPr is present on histidine 230. Aspartate 244 provides a ligand contact to sn-glycerol 3-phosphate. Aspartate 244 and glutamine 245 together coordinate glycerol. ADP contacts are provided by threonine 266 and glycine 309. Residues threonine 266, glycine 309, glutamine 313, and glycine 410 each coordinate ATP. The ADP site is built by glycine 410 and asparagine 414.

This sequence belongs to the FGGY kinase family. In terms of assembly, homotetramer and homodimer (in equilibrium). In terms of processing, the phosphoenolpyruvate-dependent sugar phosphotransferase system (PTS), including enzyme I, and histidine-containing protein (HPr) are required for the phosphorylation, which leads to the activation of the enzyme.

It carries out the reaction glycerol + ATP = sn-glycerol 3-phosphate + ADP + H(+). It functions in the pathway polyol metabolism; glycerol degradation via glycerol kinase pathway; sn-glycerol 3-phosphate from glycerol: step 1/1. Activated by phosphorylation and inhibited by fructose 1,6-bisphosphate (FBP). In terms of biological role, key enzyme in the regulation of glycerol uptake and metabolism. Catalyzes the phosphorylation of glycerol to yield sn-glycerol 3-phosphate. The polypeptide is Glycerol kinase (Bacillus mycoides (strain KBAB4) (Bacillus weihenstephanensis)).